An 83-amino-acid chain; its full sequence is Small ribosomal subunit protein uS17 (83 aa).

The protein belongs to the universal ribosomal protein uS17 family. In terms of assembly, part of the 30S ribosomal subunit.

Its function is as follows. One of the primary rRNA binding proteins, it binds specifically to the 5'-end of 16S ribosomal RNA. The sequence is that of Small ribosomal subunit protein uS17 from Aliarcobacter butzleri (strain RM4018) (Arcobacter butzleri).